The sequence spans 342 residues: WW domain binding protein 1-like (342 aa).

The chain crosses the membrane as a helical span at residues 42 to 62; the sequence is LWWFWLVWTIIIILSCCCVCH. Disordered stretches follow at residues 133-247 and 292-320; these read LPPQ…RRFT and PGDE…RPPA. Over residues 158–173 the composition is skewed to low complexity; it reads SSPLSEPSRSSTRPPS. Serine 173 is modified (phosphoserine). The segment covering 212 to 240 has biased composition (basic and acidic residues); the sequence is LDKDAECREELLKDDSSEHGAPDSKEKTP.

It is found in the membrane. This is WW domain binding protein 1-like (WBP1L) from Homo sapiens (Human).